Consider the following 216-residue polypeptide: Nucleoside triphosphate pyrophosphatase (216 aa).

The active-site Proton acceptor is aspartate 82.

It belongs to the Maf family. A divalent metal cation serves as cofactor.

The protein resides in the cytoplasm. It catalyses the reaction a ribonucleoside 5'-triphosphate + H2O = a ribonucleoside 5'-phosphate + diphosphate + H(+). It carries out the reaction a 2'-deoxyribonucleoside 5'-triphosphate + H2O = a 2'-deoxyribonucleoside 5'-phosphate + diphosphate + H(+). Nucleoside triphosphate pyrophosphatase. May have a dual role in cell division arrest and in preventing the incorporation of modified nucleotides into cellular nucleic acids. The chain is Nucleoside triphosphate pyrophosphatase from Mycobacterium marinum (strain ATCC BAA-535 / M).